We begin with the raw amino-acid sequence, 607 residues long: MNKEERAKRQSKIRNFSIIAHIDHGKSTLADRILEKTNALTQREMKAQLLDSMDLERERGITIKLNAVQLNYKAKDGEEYILHLIDTPGHVDFTYEVSRSLAACEGAILVVDAAQGIEAQTLANVYLALDNNLEILPVINKIDLPSADPERVRQEVEDVIGLDASEAVLASAKAGIGIEEILEQIVEKVPAPTGDSEEPLQCMIFDSLYDPYRGVIAYIRVVNGTVKVGDKVRMMATGKEFEVTEVGVFTPKTTQRDELTVGDVGFLAASIKNVGDTRVGDTITHAKRPAAEPLAGYRKLNPMVFCGLYPIDSARYNDLRDALEKLELNDSALEFEPETSQALGFGFRCGFLGLLHMEILQERIEREFKIDLITTAPSVIYKVFLTNGEDMIVDNPSNMPDPQTIDRVEEPFVKAAIMVPNDYVGAVMEICQGKRGTFIDMQYLDETRVTLTYEIPLSEIVYDFFDQLKSNTKGYASFDYELIGYKPSKLVKMDILLNSEQVDALSFIVHRDSAYDRGKVIVEKLKELIPRQQFEVPIQATIGNKVVARSTIKAMRKNVLAKCYGGDISRKRKLLDKQKEGKKRMKSVGSVEVPQEAFMAVLKMDDN.

The tr-type G domain occupies 11-193 (SKIRNFSIIA…QIVEKVPAPT (183 aa)). GTP contacts are provided by residues 23–28 (DHGKST) and 140–143 (NKID).

This sequence belongs to the TRAFAC class translation factor GTPase superfamily. Classic translation factor GTPase family. LepA subfamily.

The protein localises to the cell membrane. It catalyses the reaction GTP + H2O = GDP + phosphate + H(+). Its function is as follows. Required for accurate and efficient protein synthesis under certain stress conditions. May act as a fidelity factor of the translation reaction, by catalyzing a one-codon backward translocation of tRNAs on improperly translocated ribosomes. Back-translocation proceeds from a post-translocation (POST) complex to a pre-translocation (PRE) complex, thus giving elongation factor G a second chance to translocate the tRNAs correctly. Binds to ribosomes in a GTP-dependent manner. The sequence is that of Elongation factor 4 from Bacillus anthracis (strain CDC 684 / NRRL 3495).